The sequence spans 447 residues: N-succinylarginine dihydrolase (447 aa).

Residues 19–28 (AGLSFGNEAS), Asn110, and 137–138 (HR) each bind substrate. Residue Glu174 is part of the active site. Arg212 serves as a coordination point for substrate. His248 is an active-site residue. Substrate contacts are provided by Asp250 and Asn359. Residue Cys365 is the Nucleophile of the active site.

Belongs to the succinylarginine dihydrolase family. As to quaternary structure, homodimer.

It catalyses the reaction N(2)-succinyl-L-arginine + 2 H2O + 2 H(+) = N(2)-succinyl-L-ornithine + 2 NH4(+) + CO2. It functions in the pathway amino-acid degradation; L-arginine degradation via AST pathway; L-glutamate and succinate from L-arginine: step 2/5. Catalyzes the hydrolysis of N(2)-succinylarginine into N(2)-succinylornithine, ammonia and CO(2). This is N-succinylarginine dihydrolase from Salmonella heidelberg (strain SL476).